We begin with the raw amino-acid sequence, 273 residues long: Putative pyruvate, phosphate dikinase regulatory protein (273 aa).

149–156 is a binding site for ADP; it reads GPSRTSKT.

The protein belongs to the pyruvate, phosphate/water dikinase regulatory protein family. PDRP subfamily.

The catalysed reaction is N(tele)-phospho-L-histidyl/L-threonyl-[pyruvate, phosphate dikinase] + ADP = N(tele)-phospho-L-histidyl/O-phospho-L-threonyl-[pyruvate, phosphate dikinase] + AMP + H(+). The enzyme catalyses N(tele)-phospho-L-histidyl/O-phospho-L-threonyl-[pyruvate, phosphate dikinase] + phosphate + H(+) = N(tele)-phospho-L-histidyl/L-threonyl-[pyruvate, phosphate dikinase] + diphosphate. Bifunctional serine/threonine kinase and phosphorylase involved in the regulation of the pyruvate, phosphate dikinase (PPDK) by catalyzing its phosphorylation/dephosphorylation. The polypeptide is Putative pyruvate, phosphate dikinase regulatory protein (Rickettsia massiliae (strain Mtu5)).